We begin with the raw amino-acid sequence, 630 residues long: Protein mono-ADP-ribosyltransferase PARP6 (630 aa).

Cys-237 is subject to ADP-ribosylcysteine. Residues Glu-394 to Met-620 enclose the PARP catalytic domain. At Asp-600 the chain carries ADP-ribosyl aspartic acid.

This sequence belongs to the ARTD/PARP family. Auto-mono-ADP-ribosylated.

It catalyses the reaction L-aspartyl-[protein] + NAD(+) = 4-O-(ADP-D-ribosyl)-L-aspartyl-[protein] + nicotinamide. The enzyme catalyses L-cysteinyl-[protein] + NAD(+) = S-(ADP-D-ribosyl)-L-cysteinyl-[protein] + nicotinamide + H(+). Mono-ADP-ribosyltransferase that mediates mono-ADP-ribosylation of target proteins. This Homo sapiens (Human) protein is Protein mono-ADP-ribosyltransferase PARP6.